The sequence spans 410 residues: Probable tRNA sulfurtransferase (410 aa).

Residues 58 to 167 (AELTRRLQEV…RREIFVSVER (110 aa)) form the THUMP domain. ATP is bound by residues 185–186 (LL), 210–211 (HF), Arg-267, Gly-289, and Gln-298.

This sequence belongs to the ThiI family.

It is found in the cytoplasm. It catalyses the reaction [ThiI sulfur-carrier protein]-S-sulfanyl-L-cysteine + a uridine in tRNA + 2 reduced [2Fe-2S]-[ferredoxin] + ATP + H(+) = [ThiI sulfur-carrier protein]-L-cysteine + a 4-thiouridine in tRNA + 2 oxidized [2Fe-2S]-[ferredoxin] + AMP + diphosphate. The enzyme catalyses [ThiS sulfur-carrier protein]-C-terminal Gly-Gly-AMP + S-sulfanyl-L-cysteinyl-[cysteine desulfurase] + AH2 = [ThiS sulfur-carrier protein]-C-terminal-Gly-aminoethanethioate + L-cysteinyl-[cysteine desulfurase] + A + AMP + 2 H(+). Its pathway is cofactor biosynthesis; thiamine diphosphate biosynthesis. Its function is as follows. Catalyzes the ATP-dependent transfer of a sulfur to tRNA to produce 4-thiouridine in position 8 of tRNAs, which functions as a near-UV photosensor. Also catalyzes the transfer of sulfur to the sulfur carrier protein ThiS, forming ThiS-thiocarboxylate. This is a step in the synthesis of thiazole, in the thiamine biosynthesis pathway. The sulfur is donated as persulfide by IscS. The chain is Probable tRNA sulfurtransferase from Nocardia farcinica (strain IFM 10152).